The chain runs to 147 residues: Hemoglobin subunit beta-A/B (147 aa).

One can recognise a Globin domain in the interval glutamate 2–histidine 147. 2 residues coordinate heme b: histidine 63 and histidine 92.

This sequence belongs to the globin family. As to quaternary structure, heterotetramer of two alpha chains and two beta chains. In terms of tissue distribution, red blood cells.

Its function is as follows. Involved in oxygen transport from gills to the various peripheral tissues. The protein is Hemoglobin subunit beta-A/B of Cyprinus carpio (Common carp).